We begin with the raw amino-acid sequence, 331 residues long: Phosphoenolpyruvate transferase (331 aa).

A 7,8-didemethyl-8-hydroxy-5-deazariboflavin-binding site is contributed by aspartate 63.

This sequence belongs to the CofD family. As to quaternary structure, homodimer. The cofactor is Mg(2+).

It carries out the reaction enolpyruvoyl-2-diphospho-5'-guanosine + 7,8-didemethyl-8-hydroxy-5-deazariboflavin = dehydro coenzyme F420-0 + GMP + H(+). The protein operates within cofactor biosynthesis; coenzyme F420 biosynthesis. Functionally, catalyzes the transfer of the phosphoenolpyruvate moiety from enoylpyruvoyl-2-diphospho-5'-guanosine (EPPG) to 7,8-didemethyl-8-hydroxy-5-deazariboflavin (FO) with the formation of dehydro coenzyme F420-0 and GMP. In Mycobacterium bovis (strain ATCC BAA-935 / AF2122/97), this protein is Phosphoenolpyruvate transferase.